We begin with the raw amino-acid sequence, 436 residues long: GTPase Der (436 aa).

EngA-type G domains lie at 4–167 (PVIA…PKIE) and 176–351 (IRFS…ESHS). Residues 10–17 (GRPNVGKS), 57–61 (DTGGI), 119–122 (NKVD), 182–189 (GRPNVGKS), 229–233 (DTAGM), and 294–297 (NKWD) each bind GTP. Residues 352-436 (IRIQTNVLND…PIHIIARARD (85 aa)) enclose the KH-like domain.

The protein belongs to the TRAFAC class TrmE-Era-EngA-EngB-Septin-like GTPase superfamily. EngA (Der) GTPase family. Associates with the 50S ribosomal subunit.

Its function is as follows. GTPase that plays an essential role in the late steps of ribosome biogenesis. The chain is GTPase Der from Bacillus cereus (strain ATCC 10987 / NRS 248).